Consider the following 300-residue polypeptide: UDP-N-acetylenolpyruvoylglucosamine reductase (300 aa).

Positions 30–194 (KVGGPADFFA…LAAVFSLAAG (165 aa)) constitute an FAD-binding PCMH-type domain. Arg-174 is a catalytic residue. Ser-223 serves as the catalytic Proton donor. Glu-293 is a catalytic residue.

It belongs to the MurB family. The cofactor is FAD.

The protein resides in the cytoplasm. It catalyses the reaction UDP-N-acetyl-alpha-D-muramate + NADP(+) = UDP-N-acetyl-3-O-(1-carboxyvinyl)-alpha-D-glucosamine + NADPH + H(+). It functions in the pathway cell wall biogenesis; peptidoglycan biosynthesis. Functionally, cell wall formation. This is UDP-N-acetylenolpyruvoylglucosamine reductase from Geotalea uraniireducens (strain Rf4) (Geobacter uraniireducens).